Here is a 460-residue protein sequence, read N- to C-terminus: Adenosylhomocysteinase (460 aa).

Thr83, Asp158, and Glu184 together coordinate substrate. 185-187 (TTT) provides a ligand contact to NAD(+). Substrate-binding residues include Lys214 and Asp218. Residues Asn219, 248–253 (GYGDVG), Glu271, 327–329 (IGH), and Asn373 contribute to the NAD(+) site.

Belongs to the adenosylhomocysteinase family. Requires NAD(+) as cofactor.

Its subcellular location is the cytoplasm. It carries out the reaction S-adenosyl-L-homocysteine + H2O = L-homocysteine + adenosine. The protein operates within amino-acid biosynthesis; L-homocysteine biosynthesis; L-homocysteine from S-adenosyl-L-homocysteine: step 1/1. May play a key role in the regulation of the intracellular concentration of adenosylhomocysteine. This chain is Adenosylhomocysteinase, found in Bdellovibrio bacteriovorus (strain ATCC 15356 / DSM 50701 / NCIMB 9529 / HD100).